A 1190-amino-acid chain; its full sequence is Isoleucine--tRNA ligase, cytoplasmic (1190 aa).

The 'HIGH' region motif lies at 49 to 59; sequence PFATGLPHYGH. The disordered stretch occupies residues 271–299; that stretch reads DKPKAKLSNGPAGDTKKANPKAKGAKPES. The 'KMSKS' region signature appears at 632–636; the sequence is KMAKK. Residue Lys635 participates in ATP binding.

This sequence belongs to the class-I aminoacyl-tRNA synthetase family.

The protein resides in the cytoplasm. It is found in the cytosol. It catalyses the reaction tRNA(Ile) + L-isoleucine + ATP = L-isoleucyl-tRNA(Ile) + AMP + diphosphate. This is Isoleucine--tRNA ligase, cytoplasmic from Arabidopsis thaliana (Mouse-ear cress).